Consider the following 249-residue polypeptide: Triosephosphate isomerase (249 aa).

9–11 contacts substrate; it reads NWK. Catalysis depends on His-94, which acts as the Electrophile. Residue Glu-166 is the Proton acceptor of the active site. Substrate contacts are provided by residues Gly-172 and 232–233; that span reads GG.

This sequence belongs to the triosephosphate isomerase family. In terms of assembly, homodimer.

The protein resides in the cytoplasm. The catalysed reaction is D-glyceraldehyde 3-phosphate = dihydroxyacetone phosphate. The protein operates within carbohydrate biosynthesis; gluconeogenesis. Its pathway is carbohydrate degradation; glycolysis; D-glyceraldehyde 3-phosphate from glycerone phosphate: step 1/1. Involved in the gluconeogenesis. Catalyzes stereospecifically the conversion of dihydroxyacetone phosphate (DHAP) to D-glyceraldehyde-3-phosphate (G3P). The sequence is that of Triosephosphate isomerase from Xylella fastidiosa (strain M12).